The sequence spans 530 residues: Probable glycerol-3-phosphate acyltransferase 2 (530 aa).

The next 3 membrane-spanning stretches (helical) occupy residues 70–90 (YFMV…LLVL), 93–113 (FISL…SFFG), and 275–295 (LVLF…LVFG). The short motif at 339–344 (HRTLLD) is the HXXXXD motif element.

Belongs to the GPAT/DAPAT family. In terms of tissue distribution, weakly or not expressed in roots, leaves, seedlings, developing siliques and flower buds.

It localises to the membrane. It catalyses the reaction sn-glycerol 3-phosphate + an acyl-CoA = a 1-acyl-sn-glycero-3-phosphate + CoA. It functions in the pathway phospholipid metabolism; CDP-diacylglycerol biosynthesis; CDP-diacylglycerol from sn-glycerol 3-phosphate: step 1/3. In terms of biological role, esterifies acyl-group from acyl-ACP to the sn-1 position of glycerol-3-phosphate, an essential step in glycerolipid biosynthesis. This chain is Probable glycerol-3-phosphate acyltransferase 2 (GPAT2), found in Arabidopsis thaliana (Mouse-ear cress).